We begin with the raw amino-acid sequence, 216 residues long: Adenylate kinase (216 aa).

10–15 (GAGKGT) contacts ATP. The interval 30–59 (STGDMFRAAIKEGTPLGLQAKEYMDRGDLV) is NMP. AMP contacts are provided by residues Thr31, Arg36, 57–59 (DLV), 85–88 (GFPR), and Gln92. The segment at 126 to 163 (GRRICKNCGATYHLVFNPPAKSGVCDKCGGELYQRADD) is LID. Residue Arg127 coordinates ATP. Residues Cys130 and Cys133 each coordinate Zn(2+). Residue 136-137 (TY) coordinates ATP. Zn(2+) is bound by residues Cys150 and Cys153. The AMP site is built by Arg160 and Arg171. Gln199 contacts ATP.

It belongs to the adenylate kinase family. In terms of assembly, monomer.

It is found in the cytoplasm. The enzyme catalyses AMP + ATP = 2 ADP. It participates in purine metabolism; AMP biosynthesis via salvage pathway; AMP from ADP: step 1/1. Functionally, catalyzes the reversible transfer of the terminal phosphate group between ATP and AMP. Plays an important role in cellular energy homeostasis and in adenine nucleotide metabolism. The chain is Adenylate kinase from Geobacillus sp. (strain WCH70).